The primary structure comprises 427 residues: Enolase (427 aa).

Glutamine 162 contributes to the (2R)-2-phosphoglycerate binding site. The Proton donor role is filled by glutamate 204. Positions 241, 284, and 311 each coordinate Mg(2+). Lysine 336, arginine 365, serine 366, and lysine 387 together coordinate (2R)-2-phosphoglycerate. Lysine 336 acts as the Proton acceptor in catalysis.

The protein belongs to the enolase family. Requires Mg(2+) as cofactor.

The protein resides in the cytoplasm. Its subcellular location is the secreted. It localises to the cell surface. It catalyses the reaction (2R)-2-phosphoglycerate = phosphoenolpyruvate + H2O. Its pathway is carbohydrate degradation; glycolysis; pyruvate from D-glyceraldehyde 3-phosphate: step 4/5. Its function is as follows. Catalyzes the reversible conversion of 2-phosphoglycerate (2-PG) into phosphoenolpyruvate (PEP). It is essential for the degradation of carbohydrates via glycolysis. This chain is Enolase, found in Natranaerobius thermophilus (strain ATCC BAA-1301 / DSM 18059 / JW/NM-WN-LF).